The chain runs to 246 residues: Octanoyltransferase (246 aa).

The BPL/LPL catalytic domain occupies 38–213; that stretch reads AQQSDEFWVL…FLAKRLGLTP (176 aa). Residues 77–84, 144–146, and 157–159 contribute to the substrate site; these read RGGQVTYH, SLG, and GLA. Cysteine 175 functions as the Acyl-thioester intermediate in the catalytic mechanism. The interval 225–246 is disordered; sequence RQENVTTGGDPGSALTQQPERL.

This sequence belongs to the LipB family.

It is found in the cytoplasm. It catalyses the reaction octanoyl-[ACP] + L-lysyl-[protein] = N(6)-octanoyl-L-lysyl-[protein] + holo-[ACP] + H(+). It functions in the pathway protein modification; protein lipoylation via endogenous pathway; protein N(6)-(lipoyl)lysine from octanoyl-[acyl-carrier-protein]: step 1/2. Functionally, catalyzes the transfer of endogenously produced octanoic acid from octanoyl-acyl-carrier-protein onto the lipoyl domains of lipoate-dependent enzymes. Lipoyl-ACP can also act as a substrate although octanoyl-ACP is likely to be the physiological substrate. The polypeptide is Octanoyltransferase (Alcanivorax borkumensis (strain ATCC 700651 / DSM 11573 / NCIMB 13689 / SK2)).